Reading from the N-terminus, the 118-residue chain is Heavy metal-associated isoprenylated plant protein 12 (118 aa).

The region spanning 1-65 (MQVVVLKLDV…KICHTEFISV (65 aa)) is the HMA domain. Positions 68–87 (VKEPEKKKPDDPKKPETKPP) are disordered. Residues 69–86 (KEPEKKKPDDPKKPETKP) show a composition bias toward basic and acidic residues. The residue at position 115 (cysteine 115) is a Cysteine methyl ester. A lipid anchor (S-farnesyl cysteine) is attached at cysteine 115. Residues 116-118 (VTS) constitute a propeptide, removed in mature form.

The protein belongs to the HIPP family.

Probable heavy-metal-binding protein. The chain is Heavy metal-associated isoprenylated plant protein 12 from Arabidopsis thaliana (Mouse-ear cress).